A 384-amino-acid polypeptide reads, in one-letter code: Prostaglandin E synthase 2 (384 aa).

Over 1–56 the chain is Lumenal; the sequence is MAQAARLSWVLVSSRCALTEGLLTRPWQPLSAQSRAGFTRVAAGSRGAAVRKGSPR. A helical membrane pass occupies residues 57 to 73; it reads LLGAAALALGGALGLYH. The Cytoplasmic portion of the chain corresponds to 74–384; that stretch reads TVRWHQRSQD…VHHVNPSCKD (311 aa). Positions 89–192 constitute a Glutaredoxin domain; that stretch reads SAAQLPLSNS…EVITYYPPMK (104 aa). Glutathione-binding positions include V147 and 163–164; that span reads DS. Residues 262–376 enclose the GST C-terminal domain; it reads YIVREGKFGA…RAIEEAPSVH (115 aa).

It belongs to the GST superfamily. Homodimer. Interacts with EXOSC10. May interact with CEBPB. In terms of processing, synthesized as a Golgi membrane-associated protein, and the proteolytic removal of the N-terminal hydrophobic domain leads to the formation of a mature cytosolic enzyme. As to expression, widely expressed. Expressed in brain, heart, liver, colon and lung.

The protein localises to the golgi apparatus membrane. Its subcellular location is the nucleus. It is found in the cytoplasm. It carries out the reaction prostaglandin H2 = prostaglandin E2. It catalyses the reaction prostaglandin H2 = (12S)-hydroxy-(5Z,8E,10E)-heptadecatrienoate + malonaldehyde. It functions in the pathway lipid metabolism; prostaglandin biosynthesis. With respect to regulation, isomerase activity is increased by sulfhydril compounds. Dithiothreitol (DTT) is most effective, followed by glutathione (GSH) and 2-mercaptoethanol. Its function is as follows. Isomerase that catalyzes the conversion of PGH2 into the more stable prostaglandin E2 (PGE2) (in vitro). The biological function and the GSH-dependent property of PTGES2 is still under debate. In vivo, PTGES2 could form a complex with GSH and heme and would not participate in PGE2 synthesis but would catalyze the degradation of prostaglandin E2 H2 (PGH2) to 12(S)-hydroxy-5(Z),8(E),10(E)-heptadecatrienoic acid (HHT) and malondialdehyde (MDA). May also have transactivation activity toward IFN-gamma (IFNG), possibly via an interaction with CEBPB; however, the relevance of transcription activation activity remains unclear. The sequence is that of Prostaglandin E synthase 2 (Ptges2) from Mus musculus (Mouse).